Here is a 387-residue protein sequence, read N- to C-terminus: Protoheme IX farnesyltransferase, mitochondrial (387 aa).

Helical transmembrane passes span 95–115 (LTVL…YPGL), 117–137 (FNTL…ANAF), 183–203 (FLVN…YMGI), 212–232 (IVNT…GWAA), 242–262 (PGGL…FNAF), 284–306 (ALNA…AYIS), 311–330 (GPWY…ARAW), and 345–365 (FFAS…CHMI).

The protein belongs to the UbiA prenyltransferase family.

The protein resides in the mitochondrion membrane. It carries out the reaction heme b + (2E,6E)-farnesyl diphosphate + H2O = Fe(II)-heme o + diphosphate. Its function is as follows. Converts protoheme IX and farnesyl diphosphate to heme O. The protein is Protoheme IX farnesyltransferase, mitochondrial (cox10) of Schizosaccharomyces pombe (strain 972 / ATCC 24843) (Fission yeast).